The primary structure comprises 109 residues: Large ribosomal subunit protein uL22 (109 aa).

The protein belongs to the universal ribosomal protein uL22 family. As to quaternary structure, part of the 50S ribosomal subunit.

This protein binds specifically to 23S rRNA; its binding is stimulated by other ribosomal proteins, e.g. L4, L17, and L20. It is important during the early stages of 50S assembly. It makes multiple contacts with different domains of the 23S rRNA in the assembled 50S subunit and ribosome. Its function is as follows. The globular domain of the protein is located near the polypeptide exit tunnel on the outside of the subunit, while an extended beta-hairpin is found that lines the wall of the exit tunnel in the center of the 70S ribosome. The sequence is that of Large ribosomal subunit protein uL22 from Cupriavidus metallidurans (strain ATCC 43123 / DSM 2839 / NBRC 102507 / CH34) (Ralstonia metallidurans).